Here is a 92-residue protein sequence, read N- to C-terminus: Large ribosomal subunit protein eL43 (92 aa).

Zn(2+)-binding residues include C39, C42, C57, and C60. The C4-type zinc finger occupies 39–60 (CSFCGKTKMKRRAVGIWHCGSC).

It belongs to the eukaryotic ribosomal protein eL43 family. As to quaternary structure, component of the large ribosomal subunit.

It localises to the cytoplasm. Component of the large ribosomal subunit. The ribosome is a large ribonucleoprotein complex responsible for the synthesis of proteins in the cell. The protein is Large ribosomal subunit protein eL43 (Rpl37a) of Mus musculus (Mouse).